Consider the following 199-residue polypeptide: Glycerol-3-phosphate acyltransferase (199 aa).

5 consecutive transmembrane segments (helical) span residues 3-23 (YILIGLISYFCGAIPFSYLLP), 50-70 (VIGFICMVLDGVKAFVPVLVF), 77-97 (IHYTGISSIFAVLGHDFPVFL), 110-130 (GVFFALCPICGFTFLATWISI), and 136-156 (YVSLASIVGMYAASFVAFFFN).

This sequence belongs to the PlsY family. In terms of assembly, probably interacts with PlsX.

The protein localises to the cell inner membrane. The enzyme catalyses an acyl phosphate + sn-glycerol 3-phosphate = a 1-acyl-sn-glycero-3-phosphate + phosphate. It functions in the pathway lipid metabolism; phospholipid metabolism. Functionally, catalyzes the transfer of an acyl group from acyl-phosphate (acyl-PO(4)) to glycerol-3-phosphate (G3P) to form lysophosphatidic acid (LPA). This enzyme utilizes acyl-phosphate as fatty acyl donor, but not acyl-CoA or acyl-ACP. This is Glycerol-3-phosphate acyltransferase from Pseudothermotoga lettingae (strain ATCC BAA-301 / DSM 14385 / NBRC 107922 / TMO) (Thermotoga lettingae).